Here is a 206-residue protein sequence, read N- to C-terminus: Guanylate kinase (206 aa).

Residues A4–S182 form the Guanylate kinase-like domain. A11–T18 is a binding site for ATP.

It belongs to the guanylate kinase family.

Its subcellular location is the cytoplasm. It catalyses the reaction GMP + ATP = GDP + ADP. In terms of biological role, essential for recycling GMP and indirectly, cGMP. This is Guanylate kinase from Coxiella burnetii (strain RSA 493 / Nine Mile phase I).